The sequence spans 111 residues: UPF0339 protein in ptx operon 5'region (111 aa).

A run of 2 repeats spans residues 10–58 (DKAG…RYER) and 61–109 (SGAD…VVEV).

The protein belongs to the UPF0339 family. Duplicated subfamily.

The sequence is that of UPF0339 protein in ptx operon 5'region from Stutzerimonas stutzeri (Pseudomonas stutzeri).